Reading from the N-terminus, the 385-residue chain is Mannitol-1-phosphate 5-dehydrogenase (385 aa).

4–15 (AVHFGAGNIGRG) is a binding site for NAD(+).

The protein belongs to the mannitol dehydrogenase family.

It carries out the reaction D-mannitol 1-phosphate + NAD(+) = beta-D-fructose 6-phosphate + NADH + H(+). This Lactococcus lactis subsp. lactis (strain IL1403) (Streptococcus lactis) protein is Mannitol-1-phosphate 5-dehydrogenase.